Reading from the N-terminus, the 151-residue chain is Transcriptional regulator MraZ (151 aa).

SpoVT-AbrB domains are found at residues 5 to 52 and 81 to 124; these read ANAI…PLPE and AVDL…DEDA.

This sequence belongs to the MraZ family. In terms of assembly, forms oligomers.

The protein localises to the cytoplasm. The protein resides in the nucleoid. The chain is Transcriptional regulator MraZ from Pseudomonas aeruginosa (strain LESB58).